The following is a 207-amino-acid chain: Calcipressin-like protein (207 aa).

The interval 176–181 is required for tax-6 interaction; the sequence is PAIIVH.

The protein belongs to the RCAN family. Interacts with tax-6 (via catalytic domain); the interaction is calcium-dependent. Expressed in lateral hypodermal cells, marginal cells of the pharynx, vulva epithelial cells, ventral and dorsal nerve cords and commissures and various neurons in the anterior and posterior regions. Expressed in male tail structures including the diagonal muscles, sensory rays and spicules. Expressed in PHC neurons and most tail neurons and support cells of the phasmid neurons. Also expressed in pharyngeal muscle, head neurons, excretory canal cells and hypodermal seam cells.

Functionally, inhibits tax-6/calcineurin A phosphatase activity and thereby negatively regulates calcineurin-mediated functions. Plays a role in modulating temperature-dependent calcium responses in AFD neurons and in addition, also negatively regulates thermotaxis in a tax-6-dependent manner in AFD neurons. In response to changes in intracellular calcium levels may also regulate nuclear translocation of transcriptional regulators such as crtc-1. May play a role in regulating body size. Plays a role in male tail tip morphogenesis. This is Calcipressin-like protein from Caenorhabditis elegans.